Reading from the N-terminus, the 301-residue chain is MGNSTESVITDYLVRIITREGNIRALACVTTNLVGDACRRHGTLPTASAALGRALTGGVLMGALLKTGQRIALTFEGNGPLKKIIVEADANGAVRGLVRNPAVSLLRDDGKLDVAGALGKAGFLTVSRDLGLKEPYTGTVMLYTSEIAEDLAWYLTESEQIPSAVGLGVYVEQDGSVAAAGGFLIQALPPGDDQLIDRIMERIASMPPVTEMLRAGATPEGLLEYLFDGIPFDILEKRATALVCSCSRERIERVLLSLGSDELSSLIHDQGEASVGCEFCGEHYNFTREELERLRDSLTAV.

2 disulfides stabilise this stretch: Cys244–Cys246 and Cys277–Cys280.

The protein belongs to the HSP33 family. Post-translationally, under oxidizing conditions two disulfide bonds are formed involving the reactive cysteines. Under reducing conditions zinc is bound to the reactive cysteines and the protein is inactive.

It is found in the cytoplasm. Functionally, redox regulated molecular chaperone. Protects both thermally unfolding and oxidatively damaged proteins from irreversible aggregation. Plays an important role in the bacterial defense system toward oxidative stress. This is 33 kDa chaperonin from Geobacter sulfurreducens (strain ATCC 51573 / DSM 12127 / PCA).